The following is a 244-amino-acid chain: Small ribosomal subunit protein eS6 (244 aa).

The disordered stretch occupies residues 185–244 (RLQRKRHMRAVKRRRYAKQREEEATYAKLLAKRKKEEREAHAKRRSSARESSLRESKSKA). Basic residues predominate over residues 186–201 (LQRKRHMRAVKRRRYA). A compositionally biased stretch (basic and acidic residues) spans 231–244 (SARESSLRESKSKA).

Belongs to the eukaryotic ribosomal protein eS6 family. Post-translationally, ribosomal protein S6 is the major substrate of protein kinases in eukaryote ribosomes.

In terms of biological role, component of the 40S small ribosomal subunit. Plays an important role in controlling cell growth and proliferation through the selective translation of particular classes of mRNA. This Branchiostoma floridae (Florida lancelet) protein is Small ribosomal subunit protein eS6 (RPS6).